Here is a 62-residue protein sequence, read N- to C-terminus: Mastoparan-AF (62 aa).

Residues 1–25 (MKNTILILFTAFIALLGFFGMSAEA) form the signal peptide. 4 AXPX repeats span residues 25-28 (ADPI), 29-32 (ADPI), 33-36 (ADPI), and 43-46 (ADPE). Residues 26 to 47 (DPIADPIADPISGPNAEADPEA) constitute a propeptide that is removed on maturation. A Phenylalanine amide modification is found at Phe61.

The protein belongs to the MCD family. Mastoparan subfamily. As to expression, expressed by the venom gland.

It is found in the secreted. It localises to the target cell membrane. In terms of biological role, antimicrobial and mast cell degranulating peptide. Has broad spectrum antibacterial activity against both Gram-positive and Gram-negative bacteria (S.aureus MIC=16-32 ug/ml, S.xylosus MIC=1.5 ug/ml, S.alactolyticus MIC=8 ug/ml, C.koseri MIC=4 ug/ml, E.coli MIC=4-32 ug/ml, K.pneumoniae MIC=32 ug/ml, P.aerugiosa MIC=96 ug/ml, S.choleraesuis MIC=16 ug/ml, S.typhimurium MIC=32 ug/ml, V.parahamelytics MIC=16 ug/ml). Is also active on multi-antibiotic resistant hemolytic E.coli O157:H7. Acts by affecting membrane permeability. On E.coli O157:H7, acts through multiple membrane disruption patterns, including large perforations (full opening) at apical ends (hollow tubes), vesicle budding, forming dents, and membrane corrugation and invagination leading to irregular pits or pores. Exerts 40% lower membrane permeabilization activities on E.coli O157:H7 than on the non-pathogen E.coli BL21. Shows little hemolytic activities on sheep, chicken and human erythrocytes, but with a higher activity on chicken erythrocytes. Its mast cell degranulation activity may be related to the activation of G-protein coupled receptors in mast cells as well as interaction with other proteins located in cell endosomal membranes in the mast cells. This chain is Mastoparan-AF, found in Vespa affinis (Lesser banded hornet).